The following is a 259-amino-acid chain: Ribonuclease PH (259 aa).

Phosphate is bound by residues arginine 88 and 126 to 128 (GTR).

Belongs to the RNase PH family. As to quaternary structure, homohexameric ring arranged as a trimer of dimers.

The catalysed reaction is tRNA(n+1) + phosphate = tRNA(n) + a ribonucleoside 5'-diphosphate. Phosphorolytic 3'-5' exoribonuclease that plays an important role in tRNA 3'-end maturation. Removes nucleotide residues following the 3'-CCA terminus of tRNAs; can also add nucleotides to the ends of RNA molecules by using nucleoside diphosphates as substrates, but this may not be physiologically important. Probably plays a role in initiation of 16S rRNA degradation (leading to ribosome degradation) during starvation. In Mycolicibacterium paratuberculosis (strain ATCC BAA-968 / K-10) (Mycobacterium paratuberculosis), this protein is Ribonuclease PH.